Here is a 574-residue protein sequence, read N- to C-terminus: Probable E3 ubiquitin-protein ligase ipaH4.5 (574 aa).

The tract at residues 1 to 284 (MKPINNHSFF…YHGPQIYFSM (284 aa)) is interaction with target proteins. LRR repeat units follow at residues 63–82 (REPV…PLPL), 83–104 (HIRE…SPLL), 105–122 (TELH…TLPS), 123–143 (QLIK…SLPP), 144–165 (YLQS…PSTL), 166–183 (TILR…ELPH), 184–205 (RLQE…PQSL), 206–223 (KYLK…RLPQ), 224–246 (ELLA…ITLP), and 247–270 (ICTN…QRLT). The tract at residues 285 to 292 (SDGQQNTL) is linker. The segment at 293 to 574 (HRPLADAVTA…YRQLTDEVLA (282 aa)) is E3 ubiquitin-protein ligase catalytic domain. Residues 295-574 (PLADAVTAWF…YRQLTDEVLA (280 aa)) enclose the NEL domain. The Glycyl thioester intermediate role is filled by cysteine 379.

This sequence belongs to the LRR-containing bacterial E3 ligase family. In terms of processing, ubiquitinated in the presence of host E1 ubiquitin-activating enzyme, E2 ubiquitin-conjugating enzyme and ubiquitin.

The protein resides in the secreted. Its subcellular location is the host cytoplasm. The catalysed reaction is S-ubiquitinyl-[E2 ubiquitin-conjugating enzyme]-L-cysteine + [acceptor protein]-L-lysine = [E2 ubiquitin-conjugating enzyme]-L-cysteine + N(6)-ubiquitinyl-[acceptor protein]-L-lysine.. In terms of biological role, effector proteins function to alter host cell physiology and promote bacterial survival in host tissues. This protein is an E3 ubiquitin ligase that interferes with host's ubiquitination pathway. The protein is Probable E3 ubiquitin-protein ligase ipaH4.5 (ipaH4.5) of Shigella flexneri.